Consider the following 692-residue polypeptide: MGNSSSKSSKKDSHSNSSSRNPRPQVSRTETSHSVKSAKSNKSSRSRRSLPSSSTTNTNSNVPDPSTPSKPNLEVNHQRHSSHTNRYHFPSSSHSHSNSQNELLTTPSSSSTKRPSTSRRSSYNTKAAADLPPSMIQMEPKSPILKTNNSSTHVSKHKSSYSSTYYENALTDDDNDDKDNDISHTKRFSRSSNSRPSSIRSGSVSRRKSDVTHEEPNNGSYSSNNQENYLVQALTRSNSHASSLHSRKSSFGSDGNTAYSTPLNSPGLSKLTDHSGEYFTSNSTSSLNHHSSRDIYPSKHISNDDDIENSSQLSNIHASMENVNDKNNNITDSKKDPNEEFNDIMQSSGNKNAPKKFKKPIDIDETIQKLLDAGYAAKRTKNVCLKNNEILQICIKAREIFLSQPSLLELSPPVKIVGDVHGQYGDLLRLFTKCGFPPSSNYLFLGDYVDRGKQSLETILLLFCYKIKYPENFFLLRGNHECANVTRVYGFYDECKRRCNIKIWKTFIDTFNTLPLAAIVAGKIFCVHGGLSPVLNSMDEIRHVVRPTDVPDFGLINDLLWSDPTDSPNEWEDNERGVSYCYNKVAINKFLNKFGFDLVCRAHMVVEDGYEFFNDRSLVTVFSAPNYCGEFDNWGAVMSVSEGLLCSFELLDPLDSAALKQVMKKGRQERKLANQQQQMMETSITNDNESQQ.

2 disordered regions span residues 1–309 (MGNS…DIEN) and 321–357 (ENVN…PKKF). G2 carries N-myristoyl glycine lipidation. 3 stretches are compositionally biased toward low complexity: residues 32–41 (SHSVKSAKSN), 49–69 (SLPS…STPS), and 91–122 (SSSH…RRSS). S49 is subject to Phosphoserine. Acidic residues predominate over residues 170–179 (LTDDDNDDKD). T171 is subject to Phosphothreonine. Positions 190 to 204 (RSSNSRPSSIRSGSV) are enriched in low complexity. Over residues 207 to 216 (RKSDVTHEEP) the composition is skewed to basic and acidic residues. A phosphoserine mark is found at S209 and S222. Composition is skewed to polar residues over residues 217 to 229 (NNGS…QENY) and 251 to 267 (FGSD…NSPG). A Phosphothreonine modification is found at T261. S265 carries the post-translational modification Phosphoserine. A compositionally biased stretch (low complexity) spans 280 to 289 (TSNSTSSLNH). Residues 291–303 (SSRDIYPSKHISN) show a composition bias toward basic and acidic residues. Residues 321 to 331 (ENVNDKNNNIT) are compositionally biased toward polar residues. Positions 419, 421, 447, and 479 each coordinate Mn(2+). The Proton donor role is filled by H480. Residues H528 and H603 each contribute to the Mn(2+) site. The segment at 672–692 (LANQQQQMMETSITNDNESQQ) is disordered. Over residues 673–692 (ANQQQQMMETSITNDNESQQ) the composition is skewed to polar residues. Position 690 is a phosphoserine (S690).

This sequence belongs to the PPP phosphatase family. PP-Z subfamily. As to quaternary structure, interacts with SIS2 and VHS3, which regulate its activity. Requires Mn(2+) as cofactor.

The catalysed reaction is O-phospho-L-seryl-[protein] + H2O = L-seryl-[protein] + phosphate. It carries out the reaction O-phospho-L-threonyl-[protein] + H2O = L-threonyl-[protein] + phosphate. Inhibited by the regulatory subunits VHS3 and SIS2. Its function is as follows. Essential for the maintenance of cell size and integrity in response to osmotic stress. In Saccharomyces cerevisiae (strain ATCC 204508 / S288c) (Baker's yeast), this protein is Serine/threonine-protein phosphatase PP-Z1 (PPZ1).